Here is a 387-residue protein sequence, read N- to C-terminus: Fetuin-B (387 aa).

A signal peptide spans 1–18 (MNVLLLLVLCTLAMGCGA). Cystatin fetuin-B-type domains lie at 25-139 (AARP…YNCT) and 150-258 (MTCP…VTCS). The N-linked (GlcNAc...) asparagine glycan is linked to Asn37. Cystine bridges form between Cys94/Cys105, Cys118/Cys138, Cys152/Cys155, Cys217/Cys225, and Cys238/Cys257. N-linked (GlcNAc...) asparagine glycosylation is present at Asn137. Positions 264 to 306 (APTPRGENATVNQRPANPSKTEELQQQNTAPTNSPTKAVPKGS) are disordered. N-linked (GlcNAc...) asparagine glycosylation occurs at Asn271. Over residues 272-299 (ATVNQRPANPSKTEELQQQNTAPTNSPT) the composition is skewed to polar residues. Thr292 and Thr295 each carry an O-linked (GalNAc...) threonine glycan. Position 320 is a phosphoserine (Ser320). Residues 366–387 (KEQRSAECPGPAQKGYPFILPS) form a disordered region.

It belongs to the fetuin family. Liver and testis.

It localises to the secreted. Functionally, protease inhibitor required for egg fertilization. Required to prevent premature zona pellucida hardening before fertilization, probably by inhibiting the protease activity of ASTL, a protease that mediates the cleavage of ZP2 and triggers zona pellucida hardening. This Bos taurus (Bovine) protein is Fetuin-B (FETUB).